A 186-amino-acid chain; its full sequence is ATP synthase subunit delta (186 aa).

Belongs to the ATPase delta chain family. As to quaternary structure, F-type ATPases have 2 components, F(1) - the catalytic core - and F(0) - the membrane proton channel. F(1) has five subunits: alpha(3), beta(3), gamma(1), delta(1), epsilon(1). F(0) has three main subunits: a(1), b(2) and c(10-14). The alpha and beta chains form an alternating ring which encloses part of the gamma chain. F(1) is attached to F(0) by a central stalk formed by the gamma and epsilon chains, while a peripheral stalk is formed by the delta and b chains.

Its subcellular location is the cell inner membrane. F(1)F(0) ATP synthase produces ATP from ADP in the presence of a proton or sodium gradient. F-type ATPases consist of two structural domains, F(1) containing the extramembraneous catalytic core and F(0) containing the membrane proton channel, linked together by a central stalk and a peripheral stalk. During catalysis, ATP synthesis in the catalytic domain of F(1) is coupled via a rotary mechanism of the central stalk subunits to proton translocation. In terms of biological role, this protein is part of the stalk that links CF(0) to CF(1). It either transmits conformational changes from CF(0) to CF(1) or is implicated in proton conduction. The sequence is that of ATP synthase subunit delta from Brucella abortus (strain S19).